The chain runs to 351 residues: Translation initiation factor eIF2B subunit beta (351 aa).

The protein belongs to the eIF-2B alpha/beta/delta subunits family. In terms of assembly, component of the translation initiation factor 2B (eIF2B) complex which is a heterodecamer of two sets of five different subunits: alpha, beta, gamma, delta and epsilon. Subunits alpha, beta and delta comprise a regulatory subcomplex and subunits epsilon and gamma comprise a catalytic subcomplex. Within the complex, the hexameric regulatory complex resides at the center, with the two heterodimeric catalytic subcomplexes bound on opposite sides.

The protein localises to the cytoplasm. It localises to the cytosol. Activated by the chemical integrated stress response (ISR) inhibitor ISRIB which stimulates guanine nucleotide exchange factor activity for both phosphorylated and unphosphorylated eIF2. In terms of biological role, acts as a component of the translation initiation factor 2B (eIF2B) complex, which catalyzes the exchange of GDP for GTP on eukaryotic initiation factor 2 (eIF2) gamma subunit. Its guanine nucleotide exchange factor activity is repressed when bound to eIF2 complex phosphorylated on the alpha subunit, thereby limiting the amount of methionyl-initiator methionine tRNA available to the ribosome and consequently global translation is repressed. The chain is Translation initiation factor eIF2B subunit beta (EIF2B2) from Oryctolagus cuniculus (Rabbit).